The chain runs to 443 residues: MQPSEMVMNPKQVFLSVLIFGVAGLLLFMYLQVWIEEQHTGRVEKRREQKVTSGWGPVKYLRPVPRIMSTEKIQEHITNQNPKFHMPEDVREKKENLLLNSERSTRLLTKTSHSQGGDQALSKSTGSPTEKLIEKRQGAKTVFNKFSNMNWPVDIHPLNKSLVKDNKWKKTEETQEKRRSFLQEFCKKYGGVSHHQSHLFHTVSRIYVEDKHKILYCEVPKAGCSNWKRILMVLNGLASSAYNISHNAVHYGKHLKKLDSFDLKGIYTRLNTYTKAVFVRDPMERLVSAFRDKFEHPNSYYHPVFGKAIIKKYRPNACEEALINGSGVKFKEFIHYLLDSHRPVGMDIHWEKVSKLCYPCLINYDFVGKFETLEEDANYFLQMIGAPKELKFPNFKDRHSSDERTNAQVVRQYLKDLTRTERQLIYDFYYLDYLMFNYTTPFL.

At 1–12 (MQPSEMVMNPKQ) the chain is on the cytoplasmic side. The chain crosses the membrane as a helical; Signal-anchor for type II membrane protein span at residues 13-33 (VFLSVLIFGVAGLLLFMYLQV). Residues 34–443 (WIEEQHTGRV…LMFNYTTPFL (410 aa)) lie on the Lumenal side of the membrane. Over residues 108 to 128 (LTKTSHSQGGDQALSKSTGSP) the composition is skewed to polar residues. The segment at 108-132 (LTKTSHSQGGDQALSKSTGSPTEKL) is disordered. N-linked (GlcNAc...) asparagine glycosylation is present at Asn159. 220–226 (PKAGCSN) provides a ligand contact to 3'-phosphoadenylyl sulfate. Asn243 carries N-linked (GlcNAc...) asparagine glycosylation. A 3'-phosphoadenylyl sulfate-binding site is contributed by 280-288 (RDPMERLVS). Residues Asn324 and Asn437 are each glycosylated (N-linked (GlcNAc...) asparagine).

The protein belongs to the sulfotransferase 2 family. In terms of tissue distribution, highly expressed in trachea. Also expressed in fetal lung, adult pancreas, testis and salivary gland. Expressed at low level in pituitary gland, apex of the heart, adult lung, prostate and mammary gland. Weakly or not expressed in heart, liver and spinal cord.

It localises to the golgi apparatus membrane. Its subcellular location is the secreted. Functionally, catalyzes the transfer of sulfate to position 4 of non-reducing N-acetylgalactosamine (GalNAc) residues in both N-glycans and O-glycans. Participates in biosynthesis of glycoprotein hormones lutropin and thyrotropin, by mediating sulfation of their carbohydrate structures. Has a higher activity toward carbonic anhydrase VI than toward lutropin. Only active against terminal GalNAcbeta1,GalNAcbeta. Isoform 2, but not isoform 1, is active toward chondroitin. The sequence is that of Carbohydrate sulfotransferase 9 (CHST9) from Homo sapiens (Human).